Here is a 242-residue protein sequence, read N- to C-terminus: 3-deoxy-manno-octulosonate cytidylyltransferase (242 aa).

Belongs to the KdsB family.

It localises to the cytoplasm. It catalyses the reaction 3-deoxy-alpha-D-manno-oct-2-ulosonate + CTP = CMP-3-deoxy-beta-D-manno-octulosonate + diphosphate. It functions in the pathway nucleotide-sugar biosynthesis; CMP-3-deoxy-D-manno-octulosonate biosynthesis; CMP-3-deoxy-D-manno-octulosonate from 3-deoxy-D-manno-octulosonate and CTP: step 1/1. Its pathway is bacterial outer membrane biogenesis; lipopolysaccharide biosynthesis. Functionally, activates KDO (a required 8-carbon sugar) for incorporation into bacterial lipopolysaccharide in Gram-negative bacteria. The sequence is that of 3-deoxy-manno-octulosonate cytidylyltransferase from Anaeromyxobacter sp. (strain K).